The sequence spans 258 residues: Immediate-early protein IE-0 (258 aa).

The RING-type zinc-finger motif lies at 191–237 (CNICEDSSAEEQFLKPNVCCGYRVCNACYAKLWEFCTGAYPVCPICK).

This is Immediate-early protein IE-0 (IE-0) from Lymantria dispar multicapsid nuclear polyhedrosis virus (LdMNPV).